A 291-amino-acid polypeptide reads, in one-letter code: 4-hydroxy-tetrahydrodipicolinate synthase (291 aa).

Residue Thr-47 coordinates pyruvate. The Proton donor/acceptor role is filled by Tyr-134. Lys-162 (schiff-base intermediate with substrate) is an active-site residue. Residue Ile-205 participates in pyruvate binding.

The protein belongs to the DapA family. As to quaternary structure, homotetramer; dimer of dimers.

It localises to the cytoplasm. The catalysed reaction is L-aspartate 4-semialdehyde + pyruvate = (2S,4S)-4-hydroxy-2,3,4,5-tetrahydrodipicolinate + H2O + H(+). It participates in amino-acid biosynthesis; L-lysine biosynthesis via DAP pathway; (S)-tetrahydrodipicolinate from L-aspartate: step 3/4. Functionally, catalyzes the condensation of (S)-aspartate-beta-semialdehyde [(S)-ASA] and pyruvate to 4-hydroxy-tetrahydrodipicolinate (HTPA). In Methanosphaerula palustris (strain ATCC BAA-1556 / DSM 19958 / E1-9c), this protein is 4-hydroxy-tetrahydrodipicolinate synthase.